Here is a 775-residue protein sequence, read N- to C-terminus: Putative late blight resistance protein homolog R1A-3 (775 aa).

Positions Pro16–Glu39 form a coiled coil. The region spanning Arg17 to Cys237 is the NB-ARC domain. Position 50–57 (Gly50–Thr57) interacts with ATP. In terms of domain architecture, HMA spans Ile711–Leu775.

This sequence belongs to the disease resistance NB-LRR family.

It localises to the cytoplasm. The protein localises to the membrane. Functionally, confers resistance to late blight (Phytophthora infestans) races carrying the avirulence gene Avr1. Resistance proteins guard the plant against pathogens that contain an appropriate avirulence protein via an indirect interaction with this avirulence protein. That triggers a defense system including the hypersensitive response, which restricts the pathogen growth. The chain is Putative late blight resistance protein homolog R1A-3 (R1A-3) from Solanum demissum (Wild potato).